A 78-amino-acid polypeptide reads, in one-letter code: RNA-binding protein Hfq (78 aa).

The region spanning 10–69 is the Sm domain; it reads DPFLNALRKEHVPVSIYLVNGIKLQGHIESFDQYVVLLRNTVTQMVYKHAISTVVPARAV.

It belongs to the Hfq family. Homohexamer.

RNA chaperone that binds small regulatory RNA (sRNAs) and mRNAs to facilitate mRNA translational regulation in response to envelope stress, environmental stress and changes in metabolite concentrations. Also binds with high specificity to tRNAs. In Janthinobacterium sp. (strain Marseille) (Minibacterium massiliensis), this protein is RNA-binding protein Hfq.